Consider the following 299-residue polypeptide: Taste receptor type 2 member 4 (299 aa).

At 1–9 (MLQLFYFSA) the chain is on the extracellular side. A helical membrane pass occupies residues 10 to 30 (IIASVILNFVGIIMNLFIMVV). Topologically, residues 31-46 (NCKTWVKSHRISSSDR) are cytoplasmic. Residues 47–67 (ILFSLGITRFLMLGLFLVNTI) traverse the membrane as a helical segment. The Extracellular segment spans residues 68–81 (FFVSSNTERSVYLS). The chain crosses the membrane as a helical span at residues 82-102 (AFFVLCFMFXDSSSLWFVTLL). At 103–131 (NILYCVKITNFQHSVFLLLKQNISPKIPR) the chain is on the cytoplasmic side. A helical membrane pass occupies residues 132 to 152 (LLLACVLISAFTTCLYITLSQ). Residues 153–172 (ASPFPELVTKRNNTSFNTHE) lie on the Extracellular side of the membrane. Residues asparagine 164 and asparagine 165 are each glycosylated (N-linked (GlcNAc...) asparagine). The helical transmembrane segment at 173-193 (GILSLVVSLVLSSSLQFIINV) threads the bilayer. At 194–230 (TSASLLIHSLRRHIQKMQKNATGFWNPQTEAHVGAMK) the chain is on the cytoplasmic side. The helical transmembrane segment at 231 to 251 (LMIYFLILYIPYSVATLVQYL) threads the bilayer. Topologically, residues 252–262 (PFYVGMDMGTK) are extracellular. A helical membrane pass occupies residues 263–283 (AICLIFATLYSPGHSVLIIIT). Topologically, residues 284-299 (HPKLKTTAKKILCFKK) are cytoplasmic.

The protein belongs to the G-protein coupled receptor T2R family.

Its subcellular location is the membrane. The protein localises to the cell projection. It is found in the cilium membrane. Functionally, gustducin-coupled receptor implicated in the perception of bitter compounds in the oral cavity and the gastrointestinal tract. Signals through PLCB2 and the calcium-regulated cation channel TRPM5. In airway epithelial cells, binding of denatonium increases the intracellular calcium ion concentration and stimulates ciliary beat frequency. This is Taste receptor type 2 member 4 (TAS2R4) from Pongo pygmaeus (Bornean orangutan).